A 638-amino-acid polypeptide reads, in one-letter code: NADH-ubiquinone oxidoreductase chain 5 (638 aa).

15 helical membrane passes run 7–27 (TIVSTLSMSIMAILAVSIFFF), 66–86 (FAISVLKTLAFLSVISLLISV), 112–132 (FLLDQYFLLFLSVGLIVTWSI), 169–189 (LFLVFLGWEGVGFLSFLLISW), 203–223 (AVIYNRIGDIGLITFMSLAVL), 242–262 (FVLFMLFGLILAAAGKSAQFG), 275–295 (TPVSALLHSSTMVVAGVFLLV), 307–327 (ANTIVLVLGGTTALFAASTAI), 335–354 (IIAYSTTSQLGLMVAAIGIG), 365–385 (THAFFKAMLFLCLGSVIHSLN), 404–424 (SACLAMGSLALMGTPFLAGFY), 445–465 (LGIVATMLTTVYSFRIVFFCF), 487–507 (ALLRLSIGTILSGWFFSNFIF), 520–540 (GLPLLVTVVGLTVIFISLSYL), and 618–638 (YIASSIAAITIIATLTFIVLS).

Belongs to the complex I subunit 5 family.

It is found in the mitochondrion inner membrane. The enzyme catalyses a ubiquinone + NADH + 5 H(+)(in) = a ubiquinol + NAD(+) + 4 H(+)(out). Functionally, core subunit of the mitochondrial membrane respiratory chain NADH dehydrogenase (Complex I) that is believed to belong to the minimal assembly required for catalysis. Complex I functions in the transfer of electrons from NADH to the respiratory chain. The immediate electron acceptor for the enzyme is believed to be ubiquinone. This chain is NADH-ubiquinone oxidoreductase chain 5 (ND5), found in Paracentrotus lividus (Common sea urchin).